The sequence spans 213 residues: GrpE protein homolog, mitochondrial (213 aa).

The interval 35 to 55 is disordered; sequence STEKQPEEATEQKATESSPEV. The segment covering 38-55 has biased composition (basic and acidic residues); sequence KQPEEATEQKATESSPEV.

It belongs to the GrpE family. Probable component of the PAM complex at least composed of a mitochondrial HSP70 protein, Roe1, TIM44, blp/TIM16 and TIM14.

The protein resides in the mitochondrion matrix. Essential component of the PAM complex, a complex required for the translocation of transit peptide-containing proteins from the inner membrane into the mitochondrial matrix in an ATP-dependent manner. Seems to control the nucleotide-dependent binding of mitochondrial HSP70 to substrate proteins. The chain is GrpE protein homolog, mitochondrial (Roe1) from Drosophila melanogaster (Fruit fly).